We begin with the raw amino-acid sequence, 359 residues long: Methyltransferase fsa4 (359 aa).

Residues 198-199 (GG), Asp224, 248-249 (SF), Arg264, and Arg265 contribute to the S-adenosyl-L-methionine site.

The protein belongs to the class I-like SAM-binding methyltransferase superfamily. Cation-independent O-methyltransferase family.

It participates in mycotoxin biosynthesis. In terms of biological role, methyltransferase; part of the gene cluster that mediates the biosynthesis of HIV-1 integrase inhibitor equisetin and of fusarisetin A, both trans-fused decalin-containing tetramic acids showing also antimicrobial activity. The PKS module of fsa1 together with the enoylreductase fsa3 catalyze the formation of the polyketide unit which is then conjugated to L-serine by the condensation domain of the fsa1 NRPS module. Activity of the Dieckmann cyclase domain (RED) results in release of the Dieckmann product intermediate. Diels-Alderase fsa2 is involved in endo-selective Diels-Alder cycloaddition to form the decalin ring, leading to the production of N-desmethylequisetin also called trichosetin. Subsequent N-methylation is carried out by fsa4 to give equisetin. The enzymatic gene responsible for the conversion of equisetin to fusarisetin A has not been identified yet and is probably located outside of the fsa cluster. The sequence is that of Methyltransferase fsa4 from Fusarium sp. (strain FN080326).